The chain runs to 334 residues: Glyceraldehyde-3-phosphate dehydrogenase (334 aa).

NAD(+) is bound by residues 12–13, D34, and R79; that span reads RI. Residues 150 to 152, T181, 210 to 211, and R233 contribute to the D-glyceraldehyde 3-phosphate site; these read SCT and TG. C151 serves as the catalytic Nucleophile. N315 contributes to the NAD(+) binding site.

This sequence belongs to the glyceraldehyde-3-phosphate dehydrogenase family. Homotetramer.

Its subcellular location is the cytoplasm. It catalyses the reaction D-glyceraldehyde 3-phosphate + phosphate + NAD(+) = (2R)-3-phospho-glyceroyl phosphate + NADH + H(+). It functions in the pathway carbohydrate degradation; glycolysis; pyruvate from D-glyceraldehyde 3-phosphate: step 1/5. This is Glyceraldehyde-3-phosphate dehydrogenase (GPD) from Wickerhamomyces ciferrii (strain ATCC 14091 / BCRC 22168 / CBS 111 / JCM 3599 / NBRC 0793 / NRRL Y-1031 F-60-10) (Yeast).